Consider the following 276-residue polypeptide: Diaminopimelate epimerase (276 aa).

Substrate-binding residues include asparagine 13, glutamine 46, and asparagine 66. Cysteine 75 acts as the Proton donor in catalysis. Residues 76–77 (GN), asparagine 159, asparagine 192, and 210–211 (ER) contribute to the substrate site. Cysteine 219 acts as the Proton acceptor in catalysis. 220-221 (GT) serves as a coordination point for substrate.

Belongs to the diaminopimelate epimerase family. As to quaternary structure, homodimer.

It is found in the cytoplasm. The enzyme catalyses (2S,6S)-2,6-diaminopimelate = meso-2,6-diaminopimelate. It participates in amino-acid biosynthesis; L-lysine biosynthesis via DAP pathway; DL-2,6-diaminopimelate from LL-2,6-diaminopimelate: step 1/1. Its function is as follows. Catalyzes the stereoinversion of LL-2,6-diaminopimelate (L,L-DAP) to meso-diaminopimelate (meso-DAP), a precursor of L-lysine and an essential component of the bacterial peptidoglycan. The sequence is that of Diaminopimelate epimerase from Pseudomonas syringae pv. tomato (strain ATCC BAA-871 / DC3000).